The following is a 433-amino-acid chain: MDTSTQQRIISLIKKEVVPATGCTEPVAVALAAAQAASLMEQRPDHVEVLLSPNILKNAMGVGIPGTGMIGLPIAIALGIVVADPTKQLKVLDGIAPEQLEEAKKIVDGKIIQVAVKQGDIDKLYIEINMSAGSESASTIIEKIHTNIIYAAHNGQVVIDGRHDAADKSESASSESEEEIALSFEMVYDFAMNTPTEEIEFILEAARLNRHASEVSMKGNYGHAVGRMIQGSLGRRYLGDSSLTRMLTYTSSACDARMDGAPVTVMSNSGSGNQGITATLPVLSFAEDEQADHERTVRALVLSNLMVIYIKQKLGRLSALCGCVVAATGSSCGLCYLMGGTKEQIGFAIKNMIGNITGMLCDGAKPSCSMKVSSGVSSAMFSALLAMEKKVVTSNEGIVDDDVDQSIDNLTSIGRDGMNATDTLVLNIMTSKK.

It belongs to the UPF0597 family.

The sequence is that of UPF0597 protein PG_0909 from Porphyromonas gingivalis (strain ATCC BAA-308 / W83).